The sequence spans 153 residues: UPF0260 protein YcgN (153 aa).

It belongs to the UPF0260 family.

The protein is UPF0260 protein YcgN of Salmonella paratyphi B (strain ATCC BAA-1250 / SPB7).